The following is a 343-amino-acid chain: Probable dual-specificity RNA methyltransferase RlmN (343 aa).

The active-site Proton acceptor is the Glu-91. Positions 97–326 (HPGRITACIS…AEIRQEKGSD (230 aa)) constitute a Radical SAM core domain. Cys-104 and Cys-331 are joined by a disulfide. Residues Cys-111, Cys-115, and Cys-118 each contribute to the [4Fe-4S] cluster site. S-adenosyl-L-methionine contacts are provided by residues 158–159 (GE), Ser-190, 213–215 (SLH), and Asn-289. Cys-331 acts as the S-methylcysteine intermediate in catalysis.

The protein belongs to the radical SAM superfamily. RlmN family. Requires [4Fe-4S] cluster as cofactor.

The protein localises to the cytoplasm. The catalysed reaction is adenosine(2503) in 23S rRNA + 2 reduced [2Fe-2S]-[ferredoxin] + 2 S-adenosyl-L-methionine = 2-methyladenosine(2503) in 23S rRNA + 5'-deoxyadenosine + L-methionine + 2 oxidized [2Fe-2S]-[ferredoxin] + S-adenosyl-L-homocysteine. It carries out the reaction adenosine(37) in tRNA + 2 reduced [2Fe-2S]-[ferredoxin] + 2 S-adenosyl-L-methionine = 2-methyladenosine(37) in tRNA + 5'-deoxyadenosine + L-methionine + 2 oxidized [2Fe-2S]-[ferredoxin] + S-adenosyl-L-homocysteine. Specifically methylates position 2 of adenine 2503 in 23S rRNA and position 2 of adenine 37 in tRNAs. The polypeptide is Probable dual-specificity RNA methyltransferase RlmN (Thermotoga neapolitana (strain ATCC 49049 / DSM 4359 / NBRC 107923 / NS-E)).